A 233-amino-acid polypeptide reads, in one-letter code: Uridylate kinase (233 aa).

Residues K8–G11, G51, and R55 each bind ATP. Residues D68 and T129–T136 each bind UMP. 3 residues coordinate ATP: T156, Y162, and D165.

The protein belongs to the UMP kinase family. In terms of assembly, homohexamer.

Its subcellular location is the cytoplasm. The catalysed reaction is UMP + ATP = UDP + ADP. It functions in the pathway pyrimidine metabolism; CTP biosynthesis via de novo pathway; UDP from UMP (UMPK route): step 1/1. With respect to regulation, inhibited by UTP. Its function is as follows. Catalyzes the reversible phosphorylation of UMP to UDP. This chain is Uridylate kinase, found in Pseudothermotoga lettingae (strain ATCC BAA-301 / DSM 14385 / NBRC 107922 / TMO) (Thermotoga lettingae).